The chain runs to 208 residues: 3-isopropylmalate dehydratase small subunit 2 (208 aa).

The tract at residues 163–208 (EGERLDNASTSAGHGHAGTPLGDDPAKEDGPRPEQASGHQKEEHHA) is disordered.

The protein belongs to the LeuD family. LeuD type 2 subfamily. As to quaternary structure, heterodimer of LeuC and LeuD.

It carries out the reaction (2R,3S)-3-isopropylmalate = (2S)-2-isopropylmalate. It participates in amino-acid biosynthesis; L-leucine biosynthesis; L-leucine from 3-methyl-2-oxobutanoate: step 2/4. Functionally, catalyzes the isomerization between 2-isopropylmalate and 3-isopropylmalate, via the formation of 2-isopropylmaleate. This chain is 3-isopropylmalate dehydratase small subunit 2 (leuD2), found in Deinococcus radiodurans (strain ATCC 13939 / DSM 20539 / JCM 16871 / CCUG 27074 / LMG 4051 / NBRC 15346 / NCIMB 9279 / VKM B-1422 / R1).